The sequence spans 187 residues: Ribosome-recycling factor (187 aa).

It belongs to the RRF family.

The protein resides in the cytoplasm. Responsible for the release of ribosomes from messenger RNA at the termination of protein biosynthesis. May increase the efficiency of translation by recycling ribosomes from one round of translation to another. The sequence is that of Ribosome-recycling factor from Bradyrhizobium sp. (strain BTAi1 / ATCC BAA-1182).